Here is a 204-residue protein sequence, read N- to C-terminus: Allurin (204 aa).

The signal sequence occupies residues 1–19 (MDTFNFIICISALFHSTYG). Positions 36–138 (VDLHNLLRRS…DKMIGHYTQV (103 aa)) constitute an SCP domain. The helical transmembrane segment at 140-161 (WAKTYLLGCGLAFCPGNYYPYV) threads the bilayer.

This sequence belongs to the CRISP family. In terms of tissue distribution, expressed only in oviduct.

The protein localises to the membrane. The protein resides in the secreted. Its function is as follows. Involved in sperm chemoattraction. The chain is Allurin (crisp-a) from Xenopus tropicalis (Western clawed frog).